The sequence spans 395 residues: uncharacterized protein (395 aa).

2 disordered regions span residues 17 to 155 (EVKK…QVKT) and 276 to 304 (EEREKSAIKQNKEQSSEGSKTANQTHEQK). Polar residues-rich tracts occupy residues 42–71 (DGNNQVNEPTGNDNTQVVENTEDISASNVV) and 81–96 (GDASTQSPETSENVVK). The span at 103–133 (VAEKPEKEDLAVIESEDKAAKPDGEIKKNVE) shows a compositional bias: basic and acidic residues. Low complexity predominate over residues 134 to 143 (TEVTSRSTSS). Composition is skewed to basic and acidic residues over residues 144-155 (QEKDELEKQVKT) and 276-290 (EEREKSAIKQNKEQS). Positions 224–351 (LKMNGKEDDL…QRRLKELEAM (128 aa)) form a coiled coil. The span at 291–300 (SEGSKTANQT) shows a compositional bias: polar residues.

It localises to the cytoplasm. This is an uncharacterized protein from Schizosaccharomyces pombe (strain 972 / ATCC 24843) (Fission yeast).